The sequence spans 541 residues: Phenazine N-monooxygenase PhzNO1 (541 aa).

Residues D39, 47–50, 59–60, Y65, and I112 each bind FAD; these read TWYW and DT. 57–59 lines the NADP(+) pocket; the sequence is RAD. NADP(+) is bound by residues 186–192, 209–210, and W492; these read TGSTGVQ and RS.

It belongs to the FAD-binding monooxygenase family. The cofactor is FAD.

It carries out the reaction 1,6-dihydroxyphenazine + NADPH + O2 = 1,6-dihydroxyphenazine N(5)-oxide + NADP(+) + H2O. The catalysed reaction is 1,6-dihydroxyphenazine N(5)-oxide + NADPH + O2 = 1,6-dihydroxyphenazine N(5),N(10)-dioxide + NADP(+) + H2O. It catalyses the reaction 1-hydroxy-6-methoxyphenazine + NADPH + O2 = 1-hydroxy-6-methoxyphenazine N(10)-oxide + NADP(+) + H2O. The enzyme catalyses quinolin-8-ol + NADPH + O2 = 8-hydroxyquinoline N-oxide + NADP(+) + H2O. Its function is as follows. Involved in the biosynthesis of phenazine natural products including myxin, an N(5),N(10)-dioxide phenazine antiobiotic, which has antimicrobial activity. Catalyzes the aromatic N-oxidations of phenazines, such as 1,6-dihydroxyphenazine (DHP), 1,6-dihydroxyphenazine N(5)-oxide (DHPO) and 1-hydroxy-6-methoxyphenazine to produce DHPO, iodinin (1,6-dihydroxyphenazine N(5),N(10)-dioxide) and 1-hydroxy-6-methoxyphenazine N(10)-oxide, respectively. Also catalyzes the N-oxidation of 8-hydroxyquinoline, but not 6-hydroxyquinoline (6-HQ), quinoline, quinoxaline, quinine and 2-phenylpyridine. The protein is Phenazine N-monooxygenase PhzNO1 of Lysobacter antibioticus.